The primary structure comprises 401 residues: MNRPVTRKDLMIVNIGPHHPSMHGVLRLIVTLDGGDVVDCEPILGYLHRGMEKIAENRAIIQYLPYVTRWDYLATMFTEAITVNGPEQLGNIQVPKRASYIRVIMLELSRIASHLLWLGPFMADIGAQTPFFYIFREREFVYDLFEAATGMRMMHNFFRIGGIAADLPYGWIDKCLDFCDYFLTEVVEYQKLITRNPIFLERVEGVGILGGEEAINWGLSGPMLRASGIQWDLRKVDRYECYDEFEWEIQWQKQGDSLARYLVRLSEMTESIKIIQQALEGLPGGPYENLERRGFDRKMNSEMNSEMNSEWNNFDYRFISKKPSPTFELSKQELYVRVEAPKGELGIFLIGDQSGFPWRWKIRPPGFINLQILPELVKRMKLADIMTILGSIDIIMGEVDR.

It belongs to the complex I 49 kDa subunit family. In terms of assembly, NDH is composed of at least 16 different subunits, 5 of which are encoded in the nucleus.

The protein resides in the plastid. It is found in the chloroplast thylakoid membrane. It carries out the reaction a plastoquinone + NADH + (n+1) H(+)(in) = a plastoquinol + NAD(+) + n H(+)(out). The enzyme catalyses a plastoquinone + NADPH + (n+1) H(+)(in) = a plastoquinol + NADP(+) + n H(+)(out). Functionally, NDH shuttles electrons from NAD(P)H:plastoquinone, via FMN and iron-sulfur (Fe-S) centers, to quinones in the photosynthetic chain and possibly in a chloroplast respiratory chain. The immediate electron acceptor for the enzyme in this species is believed to be plastoquinone. Couples the redox reaction to proton translocation, and thus conserves the redox energy in a proton gradient. The chain is NAD(P)H-quinone oxidoreductase subunit H, chloroplastic from Aethionema cordifolium (Lebanon stonecress).